We begin with the raw amino-acid sequence, 23 residues long: Malate dehydrogenase (23 aa).

Asparagine 7 lines the NAD(+) pocket. Arginine 23 provides a ligand contact to substrate.

It belongs to the LDH/MDH superfamily. MDH type 1 family. Homodimer.

The catalysed reaction is (S)-malate + NAD(+) = oxaloacetate + NADH + H(+). The chain is Malate dehydrogenase from Pseudotsuga menziesii (Douglas-fir).